The chain runs to 370 residues: L-lysine 4-hydroxylase (370 aa).

Fe cation is bound by residues His176, Glu178, and His310.

The protein belongs to the clavaminate synthase family. It depends on Fe(2+) as a cofactor.

It catalyses the reaction L-lysine + 2-oxoglutarate + O2 = (4R)-4-hydroxy-L-lysine + succinate + CO2. Alpha-ketoglutarate-dependent dioxygenase that in vitro catalyzes the regio- and stereoselective hydroxylation of L-lysine, leading to (4R)-4-hydroxy-L-lysine. To a lesser extent, can also use (3S)-3-hydroxy-L-lysine as substrate, producing the dihydroxylated product (3R,4R)-3,4-hydroxy-L-lysine. Cannot use D-lysine or L-ornithine as substrate. This chain is L-lysine 4-hydroxylase, found in Flavobacterium johnsoniae (strain ATCC 17061 / DSM 2064 / JCM 8514 / BCRC 14874 / CCUG 350202 / NBRC 14942 / NCIMB 11054 / UW101) (Cytophaga johnsonae).